Here is a 95-residue protein sequence, read N- to C-terminus: uncharacterized protein (95 aa).

Tandem repeats lie at residues 67–74 (GCGCGCGC) and 85–92 (CGGCCGCG). The segment at 67–92 (GCGCGCGCATVAAVSPVPCGGCCGCG) is 2 X 8 AA approximate repeats.

This is an uncharacterized protein from Caenorhabditis elegans.